A 229-amino-acid polypeptide reads, in one-letter code: 2-C-methyl-D-erythritol 4-phosphate cytidylyltransferase (229 aa).

Belongs to the IspD/TarI cytidylyltransferase family. IspD subfamily.

It catalyses the reaction 2-C-methyl-D-erythritol 4-phosphate + CTP + H(+) = 4-CDP-2-C-methyl-D-erythritol + diphosphate. The protein operates within isoprenoid biosynthesis; isopentenyl diphosphate biosynthesis via DXP pathway; isopentenyl diphosphate from 1-deoxy-D-xylulose 5-phosphate: step 2/6. Its function is as follows. Catalyzes the formation of 4-diphosphocytidyl-2-C-methyl-D-erythritol from CTP and 2-C-methyl-D-erythritol 4-phosphate (MEP). In Neisseria meningitidis serogroup C / serotype 2a (strain ATCC 700532 / DSM 15464 / FAM18), this protein is 2-C-methyl-D-erythritol 4-phosphate cytidylyltransferase.